The chain runs to 559 residues: Nicotinate phosphoribosyltransferase 1 (559 aa).

Positions 33 and 221 each coordinate nicotinate. His224 bears the Phosphohistidine mark. Residue Arg331 participates in nicotinate binding. A 5-phospho-alpha-D-ribose 1-diphosphate-binding site is contributed by Thr393.

The protein belongs to the NAPRTase family. Requires Mg(2+) as cofactor. The cofactor is Mn(2+). In terms of processing, transiently phosphorylated on a His residue during the reaction cycle. Phosphorylation strongly increases the affinity for substrates and increases the rate of nicotinate D-ribonucleotide production. Dephosphorylation regenerates the low-affinity form of the enzyme, leading to product release.

It catalyses the reaction nicotinate + 5-phospho-alpha-D-ribose 1-diphosphate + ATP + H2O = nicotinate beta-D-ribonucleotide + ADP + phosphate + diphosphate. It participates in cofactor biosynthesis; NAD(+) biosynthesis; nicotinate D-ribonucleotide from nicotinate: step 1/1. In terms of biological role, catalyzes the first step in the biosynthesis of NAD from nicotinic acid, the ATP-dependent synthesis of beta-nicotinate D-ribonucleotide from nicotinate and 5-phospho-D-ribose 1-phosphate. Helps prevent cellular oxidative stress via its role in NAD biosynthesis. The chain is Nicotinate phosphoribosyltransferase 1 from Arabidopsis thaliana (Mouse-ear cress).